The chain runs to 166 residues: MFPMVTEFMNYGQQTVRAARYIGQGFMITLSHANRLPVTIQYPYEKLITSERFRGRIHFEFDKCIACEVCVRVCPIDLPVVDWKLETDIRKKRLLNYSIDFGICIFCGNCVEYCPTNCLSMTEEYELSTYDRHELNYNQIALGRLPMSIIDDYTIRTIFNLPERKT.

2 consecutive 4Fe-4S ferredoxin-type domains span residues 55 to 84 (GRIH…VDWK) and 95 to 124 (LNYS…MTEE). [4Fe-4S] cluster is bound by residues C64, C67, C70, C74, C104, C107, C110, and C114.

It belongs to the complex I 23 kDa subunit family. NDH is composed of at least 16 different subunits, 5 of which are encoded in the nucleus. Requires [4Fe-4S] cluster as cofactor.

Its subcellular location is the plastid. The protein resides in the chloroplast thylakoid membrane. The catalysed reaction is a plastoquinone + NADH + (n+1) H(+)(in) = a plastoquinol + NAD(+) + n H(+)(out). It carries out the reaction a plastoquinone + NADPH + (n+1) H(+)(in) = a plastoquinol + NADP(+) + n H(+)(out). NDH shuttles electrons from NAD(P)H:plastoquinone, via FMN and iron-sulfur (Fe-S) centers, to quinones in the photosynthetic chain and possibly in a chloroplast respiratory chain. The immediate electron acceptor for the enzyme in this species is believed to be plastoquinone. Couples the redox reaction to proton translocation, and thus conserves the redox energy in a proton gradient. The chain is NAD(P)H-quinone oxidoreductase subunit I, chloroplastic from Parthenium hysterophorus (Santa Maria feverfew).